A 1367-amino-acid chain; its full sequence is Mediator of RNA polymerase II transcription subunit 23 (1367 aa).

Residues 1343–1367 are disordered; sequence PPQALSSGSPAPQANQVPTALPVTQ. The span at 1346–1367 shows a compositional bias: polar residues; that stretch reads ALSSGSPAPQANQVPTALPVTQ.

The protein belongs to the Mediator complex subunit 23 family. Component of the Mediator complex, which is composed of MED1, MED4, MED6, MED7, MED8, MED9, MED10, MED11, MED12, MED13, MED13L, MED14, MED15, MED16, MED17, MED18, MED19, MED20, MED21, MED22, MED23, MED24, MED25, MED26, MED27, MED29, MED30, MED31, CCNC, CDK8 and CDC2L6/CDK11. The MED12, MED13, CCNC and CDK8 subunits form a distinct module termed the CDK8 module. Mediator containing the CDK8 module is less active than Mediator lacking this module in supporting transcriptional activation. Individual preparations of the Mediator complex lacking one or more distinct subunits have been variously termed ARC, CRSP, DRIP, PC2, SMCC and TRAP. Interacts with CDK8, CEBPB, CTNNB1, ELK1 and GLI3. Interacts with the adenovirus E1A protein.

The protein resides in the nucleus. In terms of biological role, component of the Mediator complex, a coactivator involved in the regulated transcription of nearly all RNA polymerase II-dependent genes. Mediator functions as a bridge to convey information from gene-specific regulatory proteins to the basal RNA polymerase II transcription machinery. Mediator is recruited to promoters by direct interactions with regulatory proteins and serves as a scaffold for the assembly of a functional pre-initiation complex with RNA polymerase II and the general transcription factors. Also required for transcriptional activation subsequent to the assembly of the pre-initiation complex. Required for transcriptional activation by adenovirus E1A protein. Required for ELK1-dependent transcriptional activation in response to activated Ras signaling. The sequence is that of Mediator of RNA polymerase II transcription subunit 23 (Med23) from Rattus norvegicus (Rat).